The primary structure comprises 148 residues: NADPH-dependent 7-cyano-7-deazaguanine reductase (148 aa).

The active-site Thioimide intermediate is Cys-50. The Proton donor role is filled by Asp-57. Substrate contacts are provided by residues 72–74 (VES) and 91–92 (HE).

The protein belongs to the GTP cyclohydrolase I family. QueF type 1 subfamily.

It localises to the cytoplasm. It catalyses the reaction 7-aminomethyl-7-carbaguanine + 2 NADP(+) = 7-cyano-7-deazaguanine + 2 NADPH + 3 H(+). It participates in tRNA modification; tRNA-queuosine biosynthesis. Its function is as follows. Catalyzes the NADPH-dependent reduction of 7-cyano-7-deazaguanine (preQ0) to 7-aminomethyl-7-deazaguanine (preQ1). In Helicobacter pylori (strain G27), this protein is NADPH-dependent 7-cyano-7-deazaguanine reductase.